A 109-amino-acid chain; its full sequence is uncharacterized protein (109 aa).

The protein to E.coli YtfG C-terminal region.

This is an uncharacterized protein from Haemophilus influenzae (strain ATCC 51907 / DSM 11121 / KW20 / Rd).